Here is a 2359-residue protein sequence, read N- to C-terminus: Neuron navigator 3 (2359 aa).

The Calponin-homology (CH) domain maps to 77-184 (IEDSKIYTDW…LFFSLSRYKQ (108 aa)). 4 stretches are compositionally biased toward polar residues: residues 204 to 226 (THTA…SSLT), 233 to 243 (SKHSGIATSQK), 257 to 279 (ASSS…FNSI), and 300 to 317 (QPSS…TSGQ). Disordered regions lie at residues 204-623 (THTA…QQQH) and 641-660 (ENEG…TKMD). Positions 318–329 (PPASAIPSPSAS) are enriched in low complexity. The span at 335 to 352 (KSMNVKHSATSTMLTVKQ) shows a compositional bias: polar residues. Composition is skewed to low complexity over residues 353-363 (PSPATSPTPSS) and 427-439 (NSGL…TNSS). The span at 465 to 491 (PKEKEEKTRDKNKACAEKSGKEEKDQV) shows a compositional bias: basic and acidic residues. Residues 522 to 536 (IPSSSGIPKPGSKVP) are compositionally biased toward low complexity. Positions 592-623 (ASPSSSCVMQVTHSSGQSPGNGAVQLPQQQQH) are enriched in polar residues. Positions 680–708 (EARRMRTVKNIADLRQNLEETMSSLRGTQ) form a coiled coil. Disordered stretches follow at residues 878–1315 (ADSW…SPLF), 1413–1472 (LSES…AMSS), 1653–1758 (GALN…KPSQ), and 1829–1855 (ETGN…SRQS). Low complexity-rich tracts occupy residues 883–896 (DSSS…DTLD) and 904–916 (NTTS…SNIT). Over residues 917–926 (VPSRKNTQLK) the composition is skewed to polar residues. The segment covering 943 to 960 (EELKKAEGDCDSHGDGAA) has biased composition (basic and acidic residues). 2 stretches are compositionally biased toward polar residues: residues 978–989 (QKASLSVSQTGS) and 997–1013 (QGGT…TSAL). Positions 1017–1029 (GKTDDAKASEKGK) are enriched in basic and acidic residues. 2 stretches are compositionally biased toward low complexity: residues 1077 to 1095 (GAST…GSAT) and 1160 to 1173 (SSTS…SSKS). Residues 1190-1199 (GRSSPVTVNQ) show a composition bias toward polar residues. Composition is skewed to low complexity over residues 1209-1229 (VSDS…TSAS), 1256-1266 (GAKAGGKSASA), and 1274-1285 (SSSVVLSPSTSL). The span at 1299-1308 (GSMGSAGGLS) shows a compositional bias: gly residues. Residues 1439–1448 (NQEEGKEWLR) are compositionally biased toward basic and acidic residues. Polar residues predominate over residues 1449-1461 (SHSTGGLQDTGNQ). Phosphoserine occurs at positions 1462 and 1466. The span at 1462 to 1472 (SPLVSPSAMSS) shows a compositional bias: low complexity. Residues 1565–1656 (AEEKAHSEQI…AQAAIQGALN (92 aa)) adopt a coiled-coil conformation. 2 stretches are compositionally biased toward low complexity: residues 1675-1692 (SVSS…GSGN) and 1749-1758 (SGSSSMKPSQ). Positions 1768–1835 (EAEAEIILQL…LKAETGNTAK (68 aa)) form a coiled coil. Residues 1841–1855 (SDSSSTASSSSSRQS) show a composition bias toward low complexity.

This sequence belongs to the Nav/unc-53 family. As to expression, present in neurons from central and peripheral nervous systems (at protein level). Highly expressed in brain cortex, midbrain, cerebellum and hippocampus.

Its subcellular location is the nucleus outer membrane. Plays a role in cell migration. May be involved in neuron regeneration. May regulate IL2 production by T-cells. In Mus musculus (Mouse), this protein is Neuron navigator 3 (Nav3).